We begin with the raw amino-acid sequence, 622 residues long: Probable ATP-citrate synthase (622 aa).

Residues 228 to 248 (ALRY…ELGG) and 279 to 305 (FPTE…KNKA) contribute to the ATP site. A Mg(2+)-binding site is contributed by Glu-245. His-287 serves as the catalytic Tele-phosphohistidine intermediate. 306–316 (LREAGAVVPTS) contacts CoA.

It in the N-terminal section; belongs to the succinate/malate CoA ligase beta subunit family. In the C-terminal section; belongs to the succinate/malate CoA ligase alpha subunit family. Homotetramer.

Its subcellular location is the cytoplasm. The enzyme catalyses oxaloacetate + acetyl-CoA + ADP + phosphate = citrate + ATP + CoA. Its function is as follows. Catalyzes the cleavage of citrate into oxaloacetate and acetyl-CoA, the latter serving as common substrate in multiple biochemical reactions in protein, carbohydrate and lipid metabolism. The polypeptide is Probable ATP-citrate synthase (acly) (Dictyostelium discoideum (Social amoeba)).